The chain runs to 89 residues: Small ribosomal subunit protein uS15 (89 aa).

Belongs to the universal ribosomal protein uS15 family. Part of the 30S ribosomal subunit. Forms a bridge to the 50S subunit in the 70S ribosome, contacting the 23S rRNA.

Its function is as follows. One of the primary rRNA binding proteins, it binds directly to 16S rRNA where it helps nucleate assembly of the platform of the 30S subunit by binding and bridging several RNA helices of the 16S rRNA. Functionally, forms an intersubunit bridge (bridge B4) with the 23S rRNA of the 50S subunit in the ribosome. In Herminiimonas arsenicoxydans, this protein is Small ribosomal subunit protein uS15.